A 1233-amino-acid chain; its full sequence is Structural maintenance of chromosomes protein 1A (1233 aa).

Residue 32 to 39 coordinates ATP; it reads GPNGSGKS. 2 coiled-coil regions span residues 104 to 124 and 163 to 503; these read EYKI…LEKL and ELAQ…KAEI. Positions 284-293 are enriched in basic and acidic residues; the sequence is IKEKDSELNQ. Disordered regions lie at residues 284-308 and 348-369; these read IKEK…TSHK and QEFE…TLEE. Residues S358 and S360 each carry the phosphoserine modification. The SMC hinge domain maps to 515-629; it reads VYGRLIDLCQ…DNVEDARRIA (115 aa). N6-acetyllysine is present on residues K648 and K713. Positions 660-935 form a coiled coil; that stretch reads KAKARRWDEK…RHNLLQACKM (276 aa). Residues 947–968 are disordered; sequence MDDISQEEGSSQGEDSVSGSQR. A compositionally biased stretch (low complexity) spans 953–967; the sequence is EEGSSQGEDSVSGSQ. Residues S957, S962, S966, and S970 each carry the phosphoserine modification. A coiled-coil region spans residues 991–1068; that stretch reads KDAQAEEEIK…FEQIKKERFD (78 aa). An N6-acetyllysine modification is found at K1037.

The protein belongs to the SMC family. SMC1 subfamily. In terms of assembly, forms a heterodimer with SMC3 in cohesin complexes. Cohesin complexes are composed of the SMC1 (SMC1A or meiosis-specific SMC1B) and SMC3 heterodimer attached via their SMC hinge domain, RAD21 which link them, and one STAG protein (STAG1, STAG2 or meiosis-specific STAG3), which interacts with RAD21. In germ cell cohesin complexes, SMC1A is mutually exclusive with SMC1B. Found in a complex with CDCA5, SMC3 and RAD21, PDS5A/SCC-112 and PDS5B/APRIN. Interacts with NDC80, SYCP2, STAG3, BRCA1 and BRAT1. The cohesin complex interacts with the cohesin loading complex subunits NIPBL/Scc2 (via HEAT repeats) and MAU2/Scc4. NIPBL directly contacts all members of the complex, RAD21, SMC1A/B, SMC3 and STAG1. Interacts with RPGR. Found in a complex containing POLE and SMC3. Phosphorylated upon ionizing radiation or DNA methylation. Phosphorylation of Ser-957 and Ser-966 activates it and is required for S-phase checkpoint activation. In terms of processing, ubiquitinated by the DCX(DCAF15) complex, leading to its degradation.

It localises to the nucleus. It is found in the chromosome. The protein resides in the centromere. Involved in chromosome cohesion during cell cycle and in DNA repair. Involved in DNA repair via its interaction with BRCA1 and its related phosphorylation by ATM, and works as a downstream effector in the ATM/NBS1 branch of S-phase checkpoint. Central component of cohesin complex. The cohesin complex is required for the cohesion of sister chromatids after DNA replication. The cohesin complex apparently forms a large proteinaceous ring within which sister chromatids can be trapped. At anaphase, the complex is cleaved and dissociates from chromatin, allowing sister chromatids to segregate. The cohesin complex may also play a role in spindle pole assembly during mitosis. Involved in DNA repair via its interaction with BRCA1 and its related phosphorylation by ATM, or via its phosphorylation by ATR. Works as a downstream effector both in the ATM/NBS1 branch and in the ATR/MSH2 branch of S-phase checkpoint. In Bos taurus (Bovine), this protein is Structural maintenance of chromosomes protein 1A (SMC1A).